The primary structure comprises 316 residues: Metal tolerance protein 8 (316 aa).

The Cytoplasmic segment spans residues 1–15 (MGPVRHILNERKSRK). Residues 16–36 (IAAFLLINTAYMFVEFTSGFM) form a helical membrane-spanning segment. Residues 37–45 (SDSLGLISD) lie on the Vacuolar side of the membrane. A helical transmembrane segment spans residues 46–66 (ACHMLFDCAALAIGLYASYIA). The Cytoplasmic segment spans residues 67-80 (RLPANGLYNYGRGR). A helical transmembrane segment spans residues 81 to 101 (FEVLSGYVNAVFLVLVGALIV). Over 102 to 116 (LESFERILEPREIST) the chain is Vacuolar. A helical membrane pass occupies residues 117 to 137 (SSLLTVSIGGLVVNVIGLVFF). The Cytoplasmic segment spans residues 138 to 176 (HEEHHHAHGEAHSCNGGLQSSENHNKSRNRHHIDHNMEG). Residues 147–166 (EAHSCNGGLQSSENHNKSRN) form a disordered region. The helical transmembrane segment at 177–197 (IFLHVLADTMGSVGVVISTLL) threads the bilayer. Topologically, residues 198–202 (IKYKG) are vacuolar. A helical membrane pass occupies residues 203 to 223 (WLIADPICSVFISIMIVSSVL). The Cytoplasmic portion of the chain corresponds to 224 to 316 (PLLRNSAEIL…LTIQIECVKR (93 aa)).

Belongs to the cation diffusion facilitator (CDF) transporter (TC 2.A.4) family. SLC30A subfamily.

It localises to the vacuole membrane. In terms of biological role, involved in sequestration of excess metal in the cytoplasm into vacuoles to maintain metal homeostasis. The chain is Metal tolerance protein 8 (MTP8) from Oryza sativa subsp. japonica (Rice).